The following is a 418-amino-acid chain: Actin-related protein 3 (418 aa).

This sequence belongs to the actin family. ARP3 subfamily. Component of the Arp2/3 complex.

The protein resides in the cytoplasm. Its subcellular location is the cytoskeleton. Its function is as follows. Functions as ATP-binding component of the Arp2/3 complex which is involved in regulation of actin polymerization and together with an activating nucleation-promoting factor (NPF) mediates the formation of branched actin networks. Seems to contact the pointed end of the daughter actin filament. Required during embryogenesis for the developmental migration of tail hemocytes anteriorly, along the ventral midline. The sequence is that of Actin-related protein 3 from Drosophila melanogaster (Fruit fly).